The chain runs to 379 residues: Beta sliding clamp (379 aa).

The protein belongs to the beta sliding clamp family. Forms a ring-shaped head-to-tail homodimer around DNA which binds and tethers DNA polymerases and other proteins to the DNA. The DNA replisome complex has a single clamp-loading complex (3 tau and 1 each of delta, delta', psi and chi subunits) which binds 3 Pol III cores (1 core on the leading strand and 2 on the lagging strand) each with a beta sliding clamp dimer. Additional proteins in the replisome are other copies of gamma, psi and chi, Ssb, DNA helicase and RNA primase.

The protein localises to the cytoplasm. In terms of biological role, confers DNA tethering and processivity to DNA polymerases and other proteins. Acts as a clamp, forming a ring around DNA (a reaction catalyzed by the clamp-loading complex) which diffuses in an ATP-independent manner freely and bidirectionally along dsDNA. Initially characterized for its ability to contact the catalytic subunit of DNA polymerase III (Pol III), a complex, multichain enzyme responsible for most of the replicative synthesis in bacteria; Pol III exhibits 3'-5' exonuclease proofreading activity. The beta chain is required for initiation of replication as well as for processivity of DNA replication. The chain is Beta sliding clamp (dnaN) from Rickettsia bellii (strain RML369-C).